The primary structure comprises 165 residues: Small ribosomal subunit protein uS5 (165 aa).

Positions 10-73 constitute an S5 DRBM domain; sequence QIEKLISLNR…TSARKNLRFV (64 aa).

It belongs to the universal ribosomal protein uS5 family. As to quaternary structure, part of the 30S ribosomal subunit. Contacts proteins S4 and S8.

Its function is as follows. With S4 and S12 plays an important role in translational accuracy. Functionally, located at the back of the 30S subunit body where it stabilizes the conformation of the head with respect to the body. The sequence is that of Small ribosomal subunit protein uS5 from Borreliella afzelii (strain PKo) (Borrelia afzelii).